Consider the following 203-residue polypeptide: dITP/XTP pyrophosphatase (203 aa).

Position 9 to 14 (9 to 14 (SSNAGK)) interacts with substrate. Mg(2+)-binding residues include Glu-42 and Asp-72. Asp-72 serves as the catalytic Proton acceptor. Residues Ser-73, 161-164 (FGYD), Lys-184, and 189-190 (HR) each bind substrate.

It belongs to the HAM1 NTPase family. Homodimer. Mg(2+) serves as cofactor.

The enzyme catalyses XTP + H2O = XMP + diphosphate + H(+). It catalyses the reaction dITP + H2O = dIMP + diphosphate + H(+). The catalysed reaction is ITP + H2O = IMP + diphosphate + H(+). In terms of biological role, pyrophosphatase that catalyzes the hydrolysis of nucleoside triphosphates to their monophosphate derivatives, with a high preference for the non-canonical purine nucleotides XTP (xanthosine triphosphate), dITP (deoxyinosine triphosphate) and ITP. Seems to function as a house-cleaning enzyme that removes non-canonical purine nucleotides from the nucleotide pool, thus preventing their incorporation into DNA/RNA and avoiding chromosomal lesions. This chain is dITP/XTP pyrophosphatase, found in Acidobacterium capsulatum (strain ATCC 51196 / DSM 11244 / BCRC 80197 / JCM 7670 / NBRC 15755 / NCIMB 13165 / 161).